The following is a 1021-amino-acid chain: MVIANLVFSASGTSLASVSRELYCTLFGPAPDELKHEFYVSVQLPSYSRHAKTYVVQSTLNETLEGQVVQLPSKIEDVPLDTPLIDLCKVEAVRERPPVLESVTIEVHGSLYEELTKLSEEDQLRFLQIRGDLRDCGTVVRAGQKLFVPWCQILDCVPYYQGLIDLQRTRILLLKGTDAMESCHLRKGLEDLKLRPNEGPTKELRIMLRCLEQPIERALLVPAADTDDDDSLFVFASAAVLLRLGVTSGARVTLSDGATSRIAKVFVLLSPNHFDSDAIYATPRLVVNFAEADKVVVSKYEGEMAELPVASSVSISRVGSWENSQMVYQKIILNNLTNFITAKQRIFYKDDLVPVTFDSDFSAMFSDQLNEFSVDYHDDSLVWFKIDTVKLNDDIPCEGAFRIDSKVTKLVTCNVSSSPPPPLSKCDYVSYYGLEPCFGYDRRVFDYAKRFHDIITTSRKCFQHGMNVGTTVMLHSSSVSVGKTTLVRSTCRELGIHLIEIDLLQLDPHMNSSNSTVNIVALIRAKIENVLPHTAPSVVYLAHLEGVLEKEDQISDPASLKAAKSMGIELAKLFTDYTELYPGTVFVCSTDALDVVPEAIRSKTKFEIEVPVPTETQRVEIFSWYLSPDVLNFNASQQFAMDHDVTISRLALQSAGLTPIDIRSIVESAKVCCYQRSKEKQHMLWQGGYRYINSADLSAAINKARDEFSDSIGAPKIPNVFWEDIGGLEMVKGEILDTIDMPLKFPELFASGMKKRSGILFYGPPGTGKTLLAKAVATNFSLNFFSVKGPELLNMYIGESEANVRRVFQRARDAKPCVIFFDELDSVAPKRGNQGDSGGVMDRIVSQLLAELDGLSTGGDGLFVIGATNRPDLLDEALLRPGRFDKLLYLGISDTNEKQANILRALTRKFTLDPDVSLDDLAASCPFTYTGADFYALCSDAMLNAMTRIAGNVDEKVASYNRAHNKNYSVRQWFDVIATAEDTSITVCMQDFVKAQRELVPSVSEGELNHYLAIRDNFESS.

Gly-763 to Thr-770 contributes to the ATP binding site.

This sequence belongs to the AAA ATPase family. As to quaternary structure, interacts with PEX1; forming the PEX1-PEX6 AAA ATPase complex, which is composed of a heterohexamer formed by a trimer of PEX1-PEX6 dimers.

The protein resides in the cytoplasm. It localises to the cytosol. The protein localises to the peroxisome membrane. The catalysed reaction is ATP + H2O = ADP + phosphate + H(+). Component of the PEX1-PEX6 AAA ATPase complex, a protein dislocase complex that mediates the ATP-dependent extraction of the PEX5 receptor from peroxisomal membranes, an essential step for PEX5 recycling. Specifically recognizes PEX5 monoubiquitinated at 'Cys-6', and pulls it out of the peroxisome lumen through the PEX2-PEX10-PEX12 retrotranslocation channel. Extraction by the PEX1-PEX6 AAA ATPase complex is accompanied by unfolding of the TPR repeats and release of bound cargo from PEX5. The polypeptide is Peroxisomal ATPase PEX6 (PEX6) (Eremothecium gossypii (strain ATCC 10895 / CBS 109.51 / FGSC 9923 / NRRL Y-1056) (Yeast)).